Reading from the N-terminus, the 995-residue chain is Protein translocase subunit SecA (995 aa).

ATP-binding positions include Gln86, 104–108 (GEGKT), and Asp535. A disordered region spans residues 883–911 (AQTVSSDGNGEVVRKPQRRSTPQIGRNEL). Residues Cys912, Cys914, Cys923, and His924 each coordinate Zn(2+). Residues 939 to 995 (PSAPPASKALKSTPATQTAVAEEAAKIQAAINSGKLPPTQTTPRGRQAPSVPRGKKR) form a disordered region. Low complexity predominate over residues 957 to 969 (AVAEEAAKIQAAI).

This sequence belongs to the SecA family. In terms of assembly, monomer and homodimer. Part of the essential Sec protein translocation apparatus which comprises SecA, SecYEG and auxiliary proteins SecDF. Other proteins may also be involved. It depends on Zn(2+) as a cofactor.

The protein localises to the cell membrane. It localises to the cytoplasm. It catalyses the reaction ATP + H2O + cellular proteinSide 1 = ADP + phosphate + cellular proteinSide 2.. Its function is as follows. Part of the Sec protein translocase complex. Interacts with the SecYEG preprotein conducting channel. Has a central role in coupling the hydrolysis of ATP to the transfer of proteins into and across the cell membrane, serving as an ATP-driven molecular motor driving the stepwise translocation of polypeptide chains across the membrane. The polypeptide is Protein translocase subunit SecA (Chloroflexus aurantiacus (strain ATCC 29366 / DSM 635 / J-10-fl)).